A 323-amino-acid chain; its full sequence is Transcription factor LUX (323 aa).

Disordered regions lie at residues 1–25 (MGEE…WEMG), 53–139 (ERSR…DLSG), and 267–298 (GYHH…ESNP). Over residues 65–87 (SETTLSSLRGGSSGPNTSSSNNN) the composition is skewed to low complexity. The myb-like GARP DNA-binding region spans 139–200 (GKTLKRPRLV…HLQKYRLYLK (62 aa)).

As to quaternary structure, interacts with ELF3 and forms a complex with ELF3 and ELF4.

Its subcellular location is the nucleus. In terms of biological role, transcription factor that is essential for the generation of the circadian clock oscillation. Is necessary for activation of CCA1 and LHY expression. Is coregulated with TOC1 and seems to be repressed by CCA1 and LHY by direct binding of these proteins to the evening element in the LUX promoter. Directly regulates the expression of PRR9, a major component of the morning transcriptional feedback circuit, by binding specific sites on PRR9 promoter. Binds to its own promoter, inducing a negative auto-regulatory feedback loop within the core clock. Binds to ELF3 and associates with ELF4 in a diurnal complex which is required for the expression of the growth-promoting transcription factors PIF4 and PIF5 and subsequent hypocotyl growth in the early evening. The chain is Transcription factor LUX (LUX) from Arabidopsis thaliana (Mouse-ear cress).